We begin with the raw amino-acid sequence, 484 residues long: Protein nucleotidyltransferase YdiU (484 aa).

Positions 87, 89, 90, 110, 122, 123, 173, and 180 each coordinate ATP. Residue Asp249 is the Proton acceptor of the active site. Mg(2+) contacts are provided by Asn250 and Asp259. Asp259 provides a ligand contact to ATP. Residues 463–484 form a disordered region; it reads EQEKYAELPPPSDRPYRTFCGT.

Belongs to the SELO family. Mg(2+) serves as cofactor. Mn(2+) is required as a cofactor.

It catalyses the reaction L-seryl-[protein] + ATP = 3-O-(5'-adenylyl)-L-seryl-[protein] + diphosphate. The enzyme catalyses L-threonyl-[protein] + ATP = 3-O-(5'-adenylyl)-L-threonyl-[protein] + diphosphate. The catalysed reaction is L-tyrosyl-[protein] + ATP = O-(5'-adenylyl)-L-tyrosyl-[protein] + diphosphate. It carries out the reaction L-histidyl-[protein] + UTP = N(tele)-(5'-uridylyl)-L-histidyl-[protein] + diphosphate. It catalyses the reaction L-seryl-[protein] + UTP = O-(5'-uridylyl)-L-seryl-[protein] + diphosphate. The enzyme catalyses L-tyrosyl-[protein] + UTP = O-(5'-uridylyl)-L-tyrosyl-[protein] + diphosphate. Its function is as follows. Nucleotidyltransferase involved in the post-translational modification of proteins. It can catalyze the addition of adenosine monophosphate (AMP) or uridine monophosphate (UMP) to a protein, resulting in modifications known as AMPylation and UMPylation. The chain is Protein nucleotidyltransferase YdiU from Geobacillus kaustophilus (strain HTA426).